Here is a 416-residue protein sequence, read N- to C-terminus: Protein LAZY 1 (416 aa).

Residues 63-83 (FTFGGSGLLTIGTLGIAAVAI) form a helical membrane-spanning segment. An IGT motif motif is present at residues 69–75 (GLLTIGT). Disordered regions lie at residues 266 to 306 (AAAA…GMPA) and 337 to 361 (KKSRNRGATDNGGGAVATGDPDGPL). Positions 270 to 282 (GVGGDRAGKGGGY) are enriched in gly residues. The Nuclear localization signal motif lies at 278-295 (KGGGYKTMKKRKVKDEKG).

It belongs to the LAZY family. In terms of tissue distribution, expressed specifically in the cells at the inner side of the vascular bundles of young leaf sheaths and peripheral cylinders of vascular bundles in the unelongated stems. Expressed in the leaf sheath pulvinus and the lamina joint.

It localises to the cell membrane. Its subcellular location is the nucleus. Functionally, involved in the regulation of shoot gravitropism and tiller angle through negative regulation of basipetal polar auxin transport (PAT). Acts as positive regulator of lateral auxin transport. Promotes vertical shoot growth. LAZY1 and TAC1 play opposite functions in the regulation of tiller growth angle. The sequence is that of Protein LAZY 1 from Oryza sativa subsp. japonica (Rice).